The sequence spans 178 residues: S-alkylcysteine N-acetyltransferase (178 aa).

In terms of domain architecture, N-acetyltransferase spans 4–163 (DIFRLATVED…IGVMMHKVLI (160 aa)).

This sequence belongs to the acetyltransferase family.

It catalyses the reaction an S-substituted L-cysteine + acetyl-CoA = an N-acetyl-L-cysteine-S-conjugate + CoA + H(+). The enzyme catalyses S-benzyl-L-cysteine + acetyl-CoA = N-acetyl-S-benzyl-L-cysteine + CoA + H(+). It carries out the reaction S-methyl-L-cysteine + acetyl-CoA = N-acetyl-S-methyl-L-cysteine + CoA + H(+). It functions in the pathway amino-acid metabolism. Involved in a cysteine salvage pathway from S-alkylcysteine. Catalyzes the first step in this pathway, i.e. the amine acetylation of an S-alkylcysteine with a preference for S-benzyl-L-cysteine over S-methyl-L-cysteine. This pathway is likely important in the catabolism of alkylated cysteine generated by proteolysis of alkylated glutathione formed in the detoxification of a wide range of electrophiles. This is S-alkylcysteine N-acetyltransferase from Bacillus subtilis (strain 168).